We begin with the raw amino-acid sequence, 85 residues long: Large ribosomal subunit protein bL27 (85 aa).

The disordered stretch occupies residues 1–21 (MAHKKAAGSSRNGRDSESKRL).

The protein belongs to the bacterial ribosomal protein bL27 family.

The protein is Large ribosomal subunit protein bL27 of Chromohalobacter salexigens (strain ATCC BAA-138 / DSM 3043 / CIP 106854 / NCIMB 13768 / 1H11).